Consider the following 387-residue polypeptide: Phosphoglycerate kinase (387 aa).

Substrate is bound by residues 21-23, R36, 59-62, R113, and R146; these read DLN and HLGR. Residues K197, E314, and 340-343 each bind ATP; that span reads GGDT.

Belongs to the phosphoglycerate kinase family. Monomer.

It is found in the cytoplasm. The catalysed reaction is (2R)-3-phosphoglycerate + ATP = (2R)-3-phospho-glyceroyl phosphate + ADP. Its pathway is carbohydrate degradation; glycolysis; pyruvate from D-glyceraldehyde 3-phosphate: step 2/5. This is Phosphoglycerate kinase from Pseudomonas fluorescens (strain Pf0-1).